The sequence spans 337 residues: Glycerol-3-phosphate dehydrogenase [NAD(P)+] (337 aa).

4 residues coordinate NADPH: S11, W12, R32, and K109. 3 residues coordinate sn-glycerol 3-phosphate: K109, G140, and S142. A144 serves as a coordination point for NADPH. 5 residues coordinate sn-glycerol 3-phosphate: K195, D248, S258, R259, and N260. The active-site Proton acceptor is K195. NADPH is bound at residue R259. NADPH-binding residues include V283 and E285.

This sequence belongs to the NAD-dependent glycerol-3-phosphate dehydrogenase family.

Its subcellular location is the cytoplasm. It carries out the reaction sn-glycerol 3-phosphate + NAD(+) = dihydroxyacetone phosphate + NADH + H(+). The catalysed reaction is sn-glycerol 3-phosphate + NADP(+) = dihydroxyacetone phosphate + NADPH + H(+). It participates in membrane lipid metabolism; glycerophospholipid metabolism. Functionally, catalyzes the reduction of the glycolytic intermediate dihydroxyacetone phosphate (DHAP) to sn-glycerol 3-phosphate (G3P), the key precursor for phospholipid synthesis. This Limosilactobacillus fermentum (strain NBRC 3956 / LMG 18251) (Lactobacillus fermentum) protein is Glycerol-3-phosphate dehydrogenase [NAD(P)+].